A 594-amino-acid polypeptide reads, in one-letter code: Beta-fructofuranosidase, insoluble isoenzyme CWINV3 (594 aa).

An N-terminal signal peptide occupies residues 1-28 (MAKLNRSNIGLSLLLSMFLANFITDLEA). Substrate is bound by residues 50–53 (WMND), Q69, W77, and 113–114 (WS). D53 is an active-site residue. N147 carries an N-linked (GlcNAc...) asparagine glycan. Position 179-180 (179-180 (RD)) interacts with substrate. The N-linked (GlcNAc...) asparagine glycan is linked to N217. Residue E235 participates in substrate binding. Residues N297 and N329 are each glycosylated (N-linked (GlcNAc...) asparagine). C428 and C480 form a disulfide bridge.

It belongs to the glycosyl hydrolase 32 family. As to expression, expressed in seedlings, leaves, flowers, and seeds.

It is found in the secreted. It localises to the extracellular space. The protein resides in the apoplast. The protein localises to the cell wall. It carries out the reaction Hydrolysis of terminal, non-reducing (2-&gt;1)- and (2-&gt;6)-linked beta-D-fructofuranose residues in fructans.. 6-fructan exohydrolase that can use phlein, levan, neokestose, levanbiose, 6-kestose, and 1-kestose as substrates. This Arabidopsis thaliana (Mouse-ear cress) protein is Beta-fructofuranosidase, insoluble isoenzyme CWINV3 (CWINV3).